A 185-amino-acid chain; its full sequence is CD160 antigen (185 aa).

A signal peptide spans 1-27; sequence MQRILMAPGQSCCALAILLAIVNFQHG. One can recognise an Ig-like V-type domain in the interval 28–136; that stretch reads GCIHVTSSAS…HGHFLSVLVT (109 aa). 2 cysteine pairs are disulfide-bonded: cysteine 47/cysteine 115 and cysteine 64/cysteine 71. Residues asparagine 138 and asparagine 156 are each glycosylated (N-linked (GlcNAc...) asparagine). The GPI-anchor amidated serine moiety is linked to residue serine 160. The propeptide at 161-185 is removed in mature form; that stretch reads SGFLQVKAWGMLVTSLVALQALYTL.

In terms of assembly, homomultimer; disulfide-linked. Interacts with classical and non-classical MHC class I molecules. Interacts with TNFRSF14 (via cysteine-rich domain 1); this interaction is direct. Interacts with LCK and CD247/CD3 zeta chain. Expressed in resting and activated NK cell subsets (at protein level). Expressed in resting NKT cells (at protein level). Expressed in activated CD8+ T cells (at protein level). Highly expressed in intraepithelial lymphocyte (IEL) subsets, particularly in innate-like CD8A-positive IELs (at protein level).

Its subcellular location is the cell membrane. It is found in the secreted. Receptor on immune cells capable to deliver stimulatory or inhibitory signals that regulate cell activation and differentiation. Exists as a GPI-anchored and as a transmembrane form, each likely initiating distinct signaling pathways via phosphoinositol 3-kinase in activated NK cells and via LCK and CD247/CD3 zeta chain in activated T cells. Receptor for both classical and non-classical MHC class I molecules. Receptor or ligand for TNF superfamily member TNFRSF14, participating in bidirectional cell-cell contact signaling between antigen presenting cells and lymphocytes. Upon ligation of TNFRSF14, provides stimulatory signal to NK cells enhancing IFNG production and anti-tumor immune response. On activated CD4+ T cells, interacts with TNFRSF14 and down-regulates CD28 costimulatory signaling, restricting memory and alloantigen-specific immune response. In the context of bacterial infection, acts as a ligand for TNFRSF14 on epithelial cells, triggering the production of antimicrobial proteins and pro-inflammatory cytokines. Functionally, the soluble GPI-cleaved form, usually released by activated lymphocytes, might play an immune regulatory role by limiting lymphocyte effector functions. This is CD160 antigen from Mus musculus (Mouse).